The chain runs to 397 residues: tRNA-specific 2-thiouridylase MnmA (397 aa).

ATP-binding positions include 19-26 (AMSGGVDS) and L45. The active-site Nucleophile is the C113. C113 and C210 are disulfide-bonded. G137 contributes to the ATP binding site. Positions 160–162 (RDQ) are interaction with tRNA. C210 functions as the Cysteine persulfide intermediate in the catalytic mechanism.

The protein belongs to the MnmA/TRMU family.

It localises to the cytoplasm. The enzyme catalyses S-sulfanyl-L-cysteinyl-[protein] + uridine(34) in tRNA + AH2 + ATP = 2-thiouridine(34) in tRNA + L-cysteinyl-[protein] + A + AMP + diphosphate + H(+). Functionally, catalyzes the 2-thiolation of uridine at the wobble position (U34) of tRNA, leading to the formation of s(2)U34. The polypeptide is tRNA-specific 2-thiouridylase MnmA (Bradyrhizobium sp. (strain BTAi1 / ATCC BAA-1182)).